Consider the following 578-residue polypeptide: Cholesterol oxidase (578 aa).

The FAD site is built by Gly-15, Glu-34, Gly-85, Ala-90, and Val-230. The Proton acceptor role is filled by His-470. FAD is bound at residue Gly-503. The segment at 529–551 is disordered; the sequence is WPNKGETDRRPPQGEPYRRLAPI. The segment covering 533-546 has biased composition (basic and acidic residues); that stretch reads GETDRRPPQGEPYR.

Belongs to the GMC oxidoreductase family. The cofactor is FAD.

It localises to the secreted. The catalysed reaction is cholesterol + O2 = cholest-5-en-3-one + H2O2. It carries out the reaction cholest-5-en-3-one = cholest-4-en-3-one. It participates in steroid metabolism; cholesterol degradation. Functionally, bifunctional enzyme that catalyzes the oxidation and isomerization of cholesterol to cholestenone (cholest-4-en-3-one), an initial step in the cholesterol degradation process. Contributes to virulence. The sequence is that of Cholesterol oxidase (choD) from Mycobacterium tuberculosis (strain CDC 1551 / Oshkosh).